A 372-amino-acid polypeptide reads, in one-letter code: MADS-box transcription factor pvg4 (372 aa).

One can recognise an MADS-box domain in the interval 1–61 (MGRKKISIAP…GRLHVFCSSD (61 aa)). The tract at residues 81–187 (SHFSSSPVEE…HPPHPHFHNN (107 aa)) is disordered. Low complexity predominate over residues 84 to 100 (SSSPVEESSTVSPETTT). Over residues 114–145 (QDQPLSDSQLDTGDSPATSETTVQDYNPQVQS) the composition is skewed to polar residues. Over residues 167 to 184 (QHHHPHTRPPHHPPHPHF) the composition is skewed to basic residues.

The protein resides in the nucleus. Functionally, acts in transcription regulation. May bind to a MEF2-like typee II promoter sequence. This Schizosaccharomyces pombe (strain 972 / ATCC 24843) (Fission yeast) protein is MADS-box transcription factor pvg4 (pvg4).